The primary structure comprises 817 residues: Two pore calcium channel protein 1 (817 aa).

The Cytoplasmic segment spans residues 1–101 (MSVILDDDVL…PKDARALAAY (101 aa)). Residues 22–66 (PLTPSNGLGQEDLPSKNGGGQSGPNSQVPSLVSGADSPPSSPPGH) are disordered. The chain crosses the membrane as a helical span at residues 102 to 122 (LFVHNHFFYMMELLTALLLLL). The Extracellular segment spans residues 123–137 (LSLCESPAVPALKLR). Residues 138–158 (TYVHATLELFALMVVVFELCM) traverse the membrane as a helical segment. Over 159–172 (KLRWLGFHTFVRHK) the chain is Cytoplasmic. A helical membrane pass occupies residues 173–193 (RTMVKTSVLVVQFIEAIVVLV). Residues 194-202 (RQTSHVRVT) lie on the Extracellular side of the membrane. The helical transmembrane segment at 203-221 (RALRCIFLVDCRYCGGVRR) threads the bilayer. The Cytoplasmic portion of the chain corresponds to 222–235 (NLRQIFQSLPPFMD). Residues 236-256 (ILLLLLFFMIIFAILGFYLFS) form a helical membrane-spanning segment. Topologically, residues 257-263 (TNPSDPY) are extracellular. Positions 264 to 287 (FNTLENSIVNLFVLLTTANFPDVM) form an intramembrane region, helical; Pore-forming. Residues 288–298 (MPSYSRNPWSC) lie on the Extracellular side of the membrane. Residues 299–319 (VFFIVYLSIELYFIMNLLLAV) form a helical membrane-spanning segment. The Cytoplasmic portion of the chain corresponds to 320 to 445 (VFDTFNDIEK…NILVNSKAFQ (126 aa)). A helical transmembrane segment spans residues 446–466 (YFMYLVVAVNGVWILVETFML). Residues 467–480 (KGGNFISKHVPWSY) lie on the Extracellular side of the membrane. A helical transmembrane segment spans residues 481–501 (LVFLTIYGVELFMKVAGLGPV). Topologically, residues 502–504 (EYL) are cytoplasmic. The helical transmembrane segment at 505-527 (SSGWNLFDFSVTAFAFLGLLALT) threads the bilayer. Residues 528–535 (LNMEPFYF) are Extracellular-facing. A helical transmembrane segment spans residues 536–550 (IVVLRPLQLLRLFKL). Residues 551–574 (KKRYRNVLDTMFELLPRMASLGLT) lie on the Cytoplasmic side of the membrane. The helical transmembrane segment at 575–595 (LLTFYYSFAIVGMEFFSGRLS) threads the bilayer. Over 596-630 (PNCCNSSTVADAYRFINHTVGNKTKVEEGYYYLNN) the chain is Extracellular. The helical; Pore-forming intramembrane region spans 631–654 (FDNILNSFVTLFELTVVNNWYIIM). Topologically, residues 655–671 (EGVTSQTSHWSRLYFMT) are extracellular. Residues 672–692 (FYIVTMVVMTIIVAFILEAFV) traverse the membrane as a helical segment. Topologically, residues 693-817 (FRMNYSRKSQ…GSRQRSQTVT (125 aa)) are cytoplasmic. The stretch at 770–794 (SLKMYQEEIQEWYEEHAREQEQQQL) forms a coiled coil. The interval 785 to 817 (HAREQEQQQLRGSAPSPAAQQTPGSRQRSQTVT) is disordered. Positions 802–817 (AAQQTPGSRQRSQTVT) are enriched in polar residues.

This sequence belongs to the calcium channel alpha-1 subunit (TC 1.A.1.11) family. Two pore calcium channel subfamily. As to quaternary structure, dimer. Interacts with MTOR; the interaction is required for TPCN1 ATP sensitivity. Interacts with STX7, STX8 and STX12. Interacts with JPT2. Found in a complex with LSM12, TPCN1 and TPCN2. In terms of processing, N-glycosylated. As to expression, widely expressed. Expressed at relatively high level in kidney, liver and lung, and in the kidney it is expressed at inner medullary collecting ducts.

It localises to the lysosome membrane. Its subcellular location is the endosome membrane. The protein resides in the early endosome membrane. The protein localises to the recycling endosome membrane. The catalysed reaction is Na(+)(in) = Na(+)(out). It carries out the reaction Ca(2+)(in) = Ca(2+)(out). Na(+) current is inhibited by ATP in a MTORC-dependent manner. ATP sensitivity is independent of PI(3,5)P2. Probably regulated by Mg(2+) ions, cytosolic Mg(2+) selectively inhibits outward current while lysosomal Mg(2+) modestly inhibits both the outward and inward currents. In the absence of Mg(2+), NAADP readily activates TPCN2, with properties similar to PI(3,5)P2. Both current elicited by PI(3,5)P2 as well as NAADP are inhibited by tetrandrine. Its function is as follows. Intracellular channel initially characterized as a non-selective Ca(2+)-permeable channel activated by NAADP (nicotinic acid adenine dinucleotide phosphate), it is also a voltage-gated highly-selective Na(+) channel activated directly by PI(3,5)P2 (phosphatidylinositol 3,5-bisphosphate) that senses pH changes and confers electrical excitability to organelles. Localizes to the early and recycling endosomes membranes where it plays a role in the uptake and processing of proteins and regulates organellar membrane excitability, membrane trafficking and pH homeostasis. Ion selectivity is not fixed but rather agonist-dependent and under defined ionic conditions, can be readily activated by both NAADP and PI(3,5)P2. Required for mTOR-dependent nutrient sensing. This Rattus norvegicus (Rat) protein is Two pore calcium channel protein 1 (Tpcn1).